Here is a 152-residue protein sequence, read N- to C-terminus: 3-dehydroquinate dehydratase (152 aa).

Residue tyrosine 26 is the Proton acceptor of the active site. Residues asparagine 78, histidine 84, and aspartate 91 each contribute to the substrate site. Residue histidine 104 is the Proton donor of the active site. Residues 105–106 (IS) and arginine 115 contribute to the substrate site.

The protein belongs to the type-II 3-dehydroquinase family. In terms of assembly, homododecamer.

The enzyme catalyses 3-dehydroquinate = 3-dehydroshikimate + H2O. Its pathway is metabolic intermediate biosynthesis; chorismate biosynthesis; chorismate from D-erythrose 4-phosphate and phosphoenolpyruvate: step 3/7. In terms of biological role, catalyzes a trans-dehydration via an enolate intermediate. In Buchnera aphidicola subsp. Cinara cedri (strain Cc), this protein is 3-dehydroquinate dehydratase.